Consider the following 709-residue polypeptide: Protein SOSEKI 3 (709 aa).

The interval 8–101 is DIX-like oligomerization domain; sequence SSVQVLYQLS…YVLRASELFD (94 aa). Disordered stretches follow at residues 242–266, 315–344, 358–393, 411–439, and 506–560; these read LHTP…AKRM, RDGR…AEQS, GGSS…KTPC, PSPA…NRPS, and DSPT…DTKP. Positions 329–342 are enriched in basic and acidic residues; the sequence is ELREVQNEKEKEAE. Residues 417–436 show a composition bias toward basic and acidic residues; sequence NKAHSSLDRQEIPPQEECKN. A compositionally biased stretch (polar residues) spans 529–544; that stretch reads VKTSNSLPRVKTTTSP. The C2HC/C3H-type zinc-finger motif lies at 663–692; sequence ILQECSTCGRTFKPDSLQVHMRGCHPPQYA. 4 residues coordinate Zn(2+): C667, C670, H682, and C686.

Belongs to the SOSEKI family. Homodimer. Forms long polymer filaments with other SOKs proteins polymers crucial for polar localization and biological activity. Zn(2+) is required as a cofactor.

The protein resides in the cell membrane. In terms of biological role, SOSEKI proteins locally interpret global polarity cues and can influence cell division orientation to coordinate cell polarization relative to body axes. The polypeptide is Protein SOSEKI 3 (Physcomitrium patens (Spreading-leaved earth moss)).